A 648-amino-acid polypeptide reads, in one-letter code: Biosynthetic arginine decarboxylase (648 aa).

At Lys-109 the chain carries N6-(pyridoxal phosphate)lysine. Position 291–301 (291–301) interacts with substrate; the sequence is IDVGGGLGIDF.

The protein belongs to the Orn/Lys/Arg decarboxylase class-II family. SpeA subfamily. The cofactor is Mg(2+). Pyridoxal 5'-phosphate serves as cofactor.

The enzyme catalyses L-arginine + H(+) = agmatine + CO2. It participates in amine and polyamine biosynthesis; agmatine biosynthesis; agmatine from L-arginine: step 1/1. Catalyzes the biosynthesis of agmatine from arginine. This Prochlorococcus marinus (strain MIT 9312) protein is Biosynthetic arginine decarboxylase.